The sequence spans 608 residues: Nuclear protein localization protein 4 homolog (608 aa).

At alanine 2 the chain carries N-acetylalanine. Lysine 179 is subject to N6-acetyllysine. Residues isoleucine 226 to phenylalanine 363 enclose the MPN domain. The RanBP2-type zinc finger occupies threonine 580–threonine 608.

This sequence belongs to the NPL4 family. Heterodimer with UFD1. The heterodimer binds ubiquitinated proteins. The heterodimer binds to VCP and inhibits Golgi membrane fusion. Interacts with ZFAND2B; probably through VCP.

It is found in the cytoplasm. The protein resides in the cytosol. Its subcellular location is the endoplasmic reticulum. The protein localises to the nucleus. Its pathway is protein degradation; proteasomal ubiquitin-dependent pathway. Functionally, the ternary complex containing UFD1, VCP and NPLOC4 binds ubiquitinated proteins and is necessary for the export of misfolded proteins from the ER to the cytoplasm, where they are degraded by the proteasome. The NPLOC4-UFD1-VCP complex regulates spindle disassembly at the end of mitosis and is necessary for the formation of a closed nuclear envelope. Acts as a negative regulator of type I interferon production via the complex formed with VCP and UFD1, which binds to RIGI and recruits RNF125 to promote ubiquitination and degradation of RIGI. The protein is Nuclear protein localization protein 4 homolog (Nploc4) of Rattus norvegicus (Rat).